Reading from the N-terminus, the 1854-residue chain is PKS-NRPS hybrid synthetase ATPKS (1854 aa).

The interval 24-423 is adenylation (A) domain; it reads FDQTQTRYSP…GRADTQIKIR (400 aa). The region spanning 523–598 is the Carrier 1 domain; sequence IPASTLTQQL…NLAAYLSDQT (76 aa). Serine 558 carries the O-(pantetheine 4'-phosphoryl)serine modification. The Ketosynthase family 3 (KS3) domain maps to 617 to 1049; that stretch reads GEDIAVISMA…GTNAHAIIEE (433 aa). Residues cysteine 791, histidine 926, and histidine 967 each act as for beta-ketoacyl synthase activity in the active site. Positions 1162-1496 are malonyl-CoA:ACP transacylase (MAT) domain; sequence LFSGQGTERA…SLSDLHIRKV (335 aa). Residues 1536–1556 are disordered; sequence KSSGQPSGQSPSGCPQPTGQI. Residues 1537 to 1555 show a composition bias toward low complexity; that stretch reads SSGQPSGQSPSGCPQPTGQ. The Carrier 2 domain maps to 1776 to 1851; sequence MMLQGLVRGI…SLSDALQKQV (76 aa). The residue at position 1811 (serine 1811) is an O-(pantetheine 4'-phosphoryl)serine.

It in the C-terminal section; belongs to the NRP synthetase family.

Its pathway is secondary metabolite biosynthesis. Functionally, PKS-NRPS hybrid synthetase; part of the gene cluster that mediates the biosynthesis of pyrophen and campyrone B, which represent a class of fungal amino acid-derived alpha-pyrone natural products. The first step of pyrophen biosynthesis is catalyzed by the PKS-NRPS hybrid synthetase ATPKS that uptakes and condensates L-phenylalanine and malonyl-CoA in order to produce desmethyldesacetylpyrophen. Although the A domain does not discriminate between 2 enantiomeric phenylalanines, the downstream KS domain must play a gate keeping role to stereoselectively accept the L-phenylalanyl-S-phosphopantetheine (Ppant)-T domain intermediate for chain elongation. The resulting amino acid derived diketide is off-loaded through lactonization to yield the alpha-pyrone intermediate desmethyldesacetylpyrophen. The cluster-specific O-methyltransferase (OMT) then methylates desmethyldesacetylpyrophen to desacetylpyrophen, which is further acetylated to pyrophen by an endogenous yet unidentified N-acetyltransferase. ATPKS has relaxed substrate specificity to activate and extend branched-chain amino acid L-leucine to produce small amounts of campyrone B. The chain is PKS-NRPS hybrid synthetase ATPKS from Aspergillus niger (strain ATCC 1015 / CBS 113.46 / FGSC A1144 / LSHB Ac4 / NCTC 3858a / NRRL 328 / USDA 3528.7).